A 275-amino-acid polypeptide reads, in one-letter code: NH(3)-dependent NAD(+) synthetase (275 aa).

46–53 provides a ligand contact to ATP; it reads GISGGQDS. Residue Asp52 participates in Mg(2+) binding. Arg140 contacts deamido-NAD(+). Residue Thr160 participates in ATP binding. Glu165 lines the Mg(2+) pocket. Deamido-NAD(+) is bound by residues Lys173 and Asp180. 2 residues coordinate ATP: Lys189 and Thr211. 260-261 contributes to the deamido-NAD(+) binding site; sequence HK.

The protein belongs to the NAD synthetase family. Homodimer.

The catalysed reaction is deamido-NAD(+) + NH4(+) + ATP = AMP + diphosphate + NAD(+) + H(+). It functions in the pathway cofactor biosynthesis; NAD(+) biosynthesis; NAD(+) from deamido-NAD(+) (ammonia route): step 1/1. Its function is as follows. Catalyzes the ATP-dependent amidation of deamido-NAD to form NAD. Uses ammonia as a nitrogen source. This Shigella dysenteriae serotype 1 (strain Sd197) protein is NH(3)-dependent NAD(+) synthetase.